A 435-amino-acid polypeptide reads, in one-letter code: Estrogen-related receptor gamma (435 aa).

Positions 1–64 are disordered; the sequence is MSNKDRHIDS…GLDSPPLYPS (64 aa). A compositionally biased stretch (polar residues) spans 10–29; it reads SSCSSFIKTEPSSPASLTDS. A compositionally biased stretch (low complexity) spans 34-47; the sequence is SPGGSSDASGSYSS. The nuclear receptor DNA-binding region spans 102 to 177; that stretch reads KRLCLVCGDI…VGMLKEGVRL (76 aa). NR C4-type zinc fingers lie at residues 105–125 and 141–160; these read CLVCGDIASGYHYGVASCEAC and CPATNECEITKRRRKSCQAC. In terms of domain architecture, NR LBD spans 210–434; that stretch reads PYNKIVSHLL…KLFSEMLEAK (225 aa).

Belongs to the nuclear hormone receptor family. NR3 subfamily. As to quaternary structure, homodimer. Interacts with NRIP1, NCOA1 and NCOR2. Binds TLE1, PNRC1 and PNRC2. Binds GRIP1. Acetylated by PCAF/KAT2 (in vitro).

The protein resides in the nucleus. In terms of biological role, orphan receptor that acts as a transcription activator in the absence of bound ligand. Binds specifically to an estrogen response element and activates reporter genes controlled by estrogen response elements. Induces the expression of PERM1 in the skeletal muscle. The sequence is that of Estrogen-related receptor gamma (ESRRG) from Pongo abelii (Sumatran orangutan).